Consider the following 391-residue polypeptide: MSRVFKKTCSNGKLSIYLGKRDFVDHVDMVEPIDGVVLVDPEYLKGRKMFVMLTCAFRYGHDDLDVIGLTFRKDLYVQVQQVVPAEPTSPQVPLTVLQERLLHKLGDNAYPFNLQMVVNLPCSVTLQPGPDDTGKACGIDFEVKSFCAENLEEKVSKKDSVRLVIRKIQFAPVEPGPGPWAQTVRRFLLSAQPLQLQAWMDREVHYHGKPISVNVSINNSTNKVIKKIKISVDQITDVVLYSLDKYTKTVFIQEFTETIAANSTFSKSFEVTPLLADNCEKQGLALDGKLKHGDTNLASSTILRPGMDKELLGILVSYKVRVNLMVSCGGILGDLTASDVGVELPLILMHPKPSNEAASSEDIVIEEFARQEPGGREESQEALAAEGDEGS.

The segment covering 369–379 (ARQEPGGREES) has biased composition (basic and acidic residues). The interval 369–391 (ARQEPGGREESQEALAAEGDEGS) is disordered.

The protein belongs to the arrestin family. As to quaternary structure, homodimer; disulfide-linked in response to retinal illumination. Interacts with CXCR4; the interaction is dependent on the C-terminal phosphorylation of CXCR4 and modulates the calcium ion mobilization activity of CXCR4. Interacts with GPR84.

It is found in the photoreceptor inner segment. It localises to the cell projection. Its subcellular location is the cilium. The protein localises to the photoreceptor outer segment. May play a role in an as yet undefined retina-specific signal transduction. Could bind to photoactivated-phosphorylated red/green opsins. This is Arrestin-C (ARR3) from Sus scrofa (Pig).